We begin with the raw amino-acid sequence, 583 residues long: Tetratricopeptide repeat protein 39C (583 aa).

The disordered stretch occupies residues 1–22 (MAGSEQQRPRRRDDGDSDAAAA). TPR repeat units lie at residues 315–348 (SLFM…AVDQ), 353–386 (HVCL…SRWS), and 485–518 (GLKY…ELCR).

Belongs to the TTC39 family.

This is Tetratricopeptide repeat protein 39C (TTC39C) from Homo sapiens (Human).